The chain runs to 29 residues: Cytochrome b6-f complex subunit 8 (29 aa).

Residues 3-23 traverse the membrane as a helical segment; sequence IITFGWVAVAAFFALSIAFVV.

Belongs to the PetN family. As to quaternary structure, the 4 large subunits of the cytochrome b6-f complex are cytochrome b6, subunit IV (17 kDa polypeptide, PetD), cytochrome f and the Rieske protein, while the 4 small subunits are PetG, PetL, PetM and PetN. The complex functions as a dimer.

The protein resides in the cellular thylakoid membrane. In terms of biological role, component of the cytochrome b6-f complex, which mediates electron transfer between photosystem II (PSII) and photosystem I (PSI), cyclic electron flow around PSI, and state transitions. This is Cytochrome b6-f complex subunit 8 from Synechococcus sp. (strain JA-3-3Ab) (Cyanobacteria bacterium Yellowstone A-Prime).